Here is a 258-residue protein sequence, read N- to C-terminus: Bidirectional sugar transporter SWEET7 (258 aa).

At 1-11 the chain is on the extracellular side; sequence MVFAHLNLLRK. A helical membrane pass occupies residues 12-32; it reads IVGIIGNFIALCLFLSPTPTF. The MtN3/slv 1 domain occupies 12–100; it reads IVGIIGNFIA…IFFVYCGRQK (89 aa). Topologically, residues 33–46 are cytoplasmic; the sequence is VRIVKKKSVEEYSP. The helical transmembrane segment at 47–67 threads the bilayer; the sequence is IPYLATLINCLVWVLYGLPTV. Residues 68 to 73 are Extracellular-facing; sequence HPDSTL. Residues 74–94 form a helical membrane-spanning segment; that stretch reads VITINGTGILIEIVFLTIFFV. The Cytoplasmic segment spans residues 95–102; the sequence is YCGRQKQR. A helical transmembrane segment spans residues 103–123; it reads LIISAVIAAETAFIAILAVLV. The Extracellular segment spans residues 124 to 134; it reads LTLQHTTEKRT. The helical transmembrane segment at 135–155 threads the bilayer; it reads MSVGIVCCVFNVMMYASPLSV. The region spanning 136–221 is the MtN3/slv 2 domain; that stretch reads SVGIVCCVFN…LYGAYYKSTK (86 aa). Topologically, residues 156–166 are cytoplasmic; sequence MKMVIKTKSVE. The helical transmembrane segment at 167 to 187 threads the bilayer; the sequence is FMPFWLSVAGFLNAGVWTIYA. The Extracellular portion of the chain corresponds to 188 to 193; that stretch reads LMPFDP. The chain crosses the membrane as a helical span at residues 194 to 214; it reads FMAIPNGIGCLFGLAQLILYG. The Cytoplasmic portion of the chain corresponds to 215 to 258; sequence AYYKSTKRIMAERENQPGYVGLSSAIARTGSEKTANTNQEPNNV.

It belongs to the SWEET sugar transporter family. In terms of assembly, forms heterooligomers with SWEET8, SWEET11, SWEET13, SWEET16 and SWEET17.

It is found in the cell membrane. Its function is as follows. Mediates both low-affinity uptake and efflux of sugar across the plasma membrane. This is Bidirectional sugar transporter SWEET7 from Arabidopsis thaliana (Mouse-ear cress).